A 461-amino-acid polypeptide reads, in one-letter code: Homogentisate 1,2-dioxygenase (461 aa).

Residues H341, E347, and H377 each coordinate Fe cation.

This sequence belongs to the homogentisate dioxygenase family. The cofactor is Fe cation.

The catalysed reaction is homogentisate + O2 = 4-maleylacetoacetate + H(+). Its pathway is amino-acid degradation; L-phenylalanine degradation; acetoacetate and fumarate from L-phenylalanine: step 4/6. This is Homogentisate 1,2-dioxygenase (HGO) from Arabidopsis thaliana (Mouse-ear cress).